The primary structure comprises 411 residues: Glutamate dehydrogenase 1, mitochondrial (411 aa).

The N-terminal 18 residues, 1–18, are a transit peptide targeting the mitochondrion; it reads MNALAATSRNFKQAAKLL. Lys-102 is an active-site residue.

This sequence belongs to the Glu/Leu/Phe/Val dehydrogenases family.

It localises to the mitochondrion. The catalysed reaction is L-glutamate + NAD(+) + H2O = 2-oxoglutarate + NH4(+) + NADH + H(+). It carries out the reaction L-glutamate + NADP(+) + H2O = 2-oxoglutarate + NH4(+) + NADPH + H(+). This is Glutamate dehydrogenase 1, mitochondrial (GDH1) from Oryza sativa subsp. indica (Rice).